A 139-amino-acid polypeptide reads, in one-letter code: Endoribonuclease YbeY (139 aa).

Zn(2+) contacts are provided by His99, His103, and His109.

The protein belongs to the endoribonuclease YbeY family. The cofactor is Zn(2+).

The protein localises to the cytoplasm. Its function is as follows. Single strand-specific metallo-endoribonuclease involved in late-stage 70S ribosome quality control and in maturation of the 3' terminus of the 16S rRNA. In Sulfurimonas denitrificans (strain ATCC 33889 / DSM 1251) (Thiomicrospira denitrificans (strain ATCC 33889 / DSM 1251)), this protein is Endoribonuclease YbeY.